We begin with the raw amino-acid sequence, 278 residues long: Undecaprenyl-diphosphatase 1 (278 aa).

A run of 7 helical transmembrane segments spans residues 1–21 (MFFGILKAIILGIVEGITEFL), 43–63 (AFTTTFEYVIQLGAIIAVVLL), 83–103 (IWATWVKVVVGVIPSVIIGFL), 112–132 (LMNWLVVSIALIVYGIAFIFI), 192–212 (FSFFLSIPTMLGVSVLKIGSY), 224–244 (IVILLVGMFVSFVVAYVVIKW), and 257–277 (FGWYRIILGVLVIALGAIGII).

This sequence belongs to the UppP family.

Its subcellular location is the cell membrane. The catalysed reaction is di-trans,octa-cis-undecaprenyl diphosphate + H2O = di-trans,octa-cis-undecaprenyl phosphate + phosphate + H(+). In terms of biological role, catalyzes the dephosphorylation of undecaprenyl diphosphate (UPP). Confers resistance to bacitracin. The sequence is that of Undecaprenyl-diphosphatase 1 from Oenococcus oeni (strain ATCC BAA-331 / PSU-1).